A 177-amino-acid polypeptide reads, in one-letter code: Adenine phosphoribosyltransferase (177 aa).

The protein belongs to the purine/pyrimidine phosphoribosyltransferase family. As to quaternary structure, homodimer.

It localises to the cytoplasm. The catalysed reaction is AMP + diphosphate = 5-phospho-alpha-D-ribose 1-diphosphate + adenine. Its pathway is purine metabolism; AMP biosynthesis via salvage pathway; AMP from adenine: step 1/1. Functionally, catalyzes a salvage reaction resulting in the formation of AMP, that is energically less costly than de novo synthesis. In Mycoplasma pneumoniae (strain ATCC 29342 / M129 / Subtype 1) (Mycoplasmoides pneumoniae), this protein is Adenine phosphoribosyltransferase.